A 70-amino-acid chain; its full sequence is Bowman-Birk type proteinase inhibitor A-II (70 aa).

Intrachain disulfides connect C11-C68, C12-C29, C15-C63, C17-C27, C36-C43, C40-C55, and C45-C53.

It belongs to the Bowman-Birk serine protease inhibitor family.

In terms of biological role, these proteins inhibit trypsin and chymotrypsin, having 2 sites of interaction with trypsin. The site of interaction with chymotrypsin has not been determined but is not independent of the trypsin-reactive sites. The polypeptide is Bowman-Birk type proteinase inhibitor A-II (Arachis hypogaea (Peanut)).